Here is a 199-residue protein sequence, read N- to C-terminus: Putative HMP/thiamine permease protein YkoE (199 aa).

Transmembrane regions (helical) follow at residues 9 to 29 (IVIM…FTHF), 40 to 60 (IAYE…AYMI), 63 to 83 (PGAA…LGNP), 85 to 105 (GPMV…VFLA), 114 to 134 (PVLM…DLFV), and 143 to 163 (GYLL…AGLL).

In terms of assembly, the complex is composed of two ATP-binding proteins (YkoD), two transmembrane proteins (YkoC and YkoE) and a solute-binding protein (YkoF).

It localises to the cell membrane. Its function is as follows. Part of the ABC transporter complex YkoCDEF that could transport hydroxymethylpyrimidine (HMP) and/or thiamine. Could also transport other HMP-containing products. Probably responsible for the translocation of the substrate across the membrane. The chain is Putative HMP/thiamine permease protein YkoE (ykoE) from Bacillus subtilis (strain 168).